Here is a 240-residue protein sequence, read N- to C-terminus: Membrane-spanning 4-domains subfamily A member 7 (240 aa).

Residues 1 to 47 (MLLQSQTMGVSHSFTPKGITIPQREKPGHMYQNEDYLQNGLPTETTV) are Cytoplasmic-facing. The helical transmembrane segment at 48 to 68 (LGTVQILCCLLISSLGAILVF) threads the bilayer. The Extracellular portion of the chain corresponds to 69-83 (APYPSHFNPAISTTL). A helical transmembrane segment spans residues 84 to 104 (MSGYPFLGALCFGITGSLSII). Residues 105–121 (SGKQSTKPFDLSSLTSN) lie on the Cytoplasmic side of the membrane. A helical membrane pass occupies residues 122-142 (AVSSVTAGAGLFLLADSMVAL). The Extracellular segment spans residues 143–178 (RTASQHCGSEMDYLSSLPYSEYYYPIYEIKDCLLTS). Residues 179–199 (VSLTGVLVVMLIFTVLELLLA) form a helical membrane-spanning segment. The Cytoplasmic portion of the chain corresponds to 200-240 (AYSSVFWWKQLYSNNPGSSFSSTQSQDHIQQVKKSSSRSWI). The segment at 218–240 (SFSSTQSQDHIQQVKKSSSRSWI) is disordered.

The protein belongs to the MS4A family. In terms of tissue distribution, ubiquitous expression in normal tissues. Expression is more elevated in adult liver, lung, spleen, and heart than in their fetal counterparts, and is higher in normal tissues than in the cancerous tissue or cell lines. Low levels of expression were detected in the promonocytic stage, whereas high levels of expression were detected in mature monocytes.

It localises to the membrane. In terms of biological role, may be involved in signal transduction as a component of a multimeric receptor complex. The polypeptide is Membrane-spanning 4-domains subfamily A member 7 (MS4A7) (Homo sapiens (Human)).